The sequence spans 61 residues: Small ribosomal subunit protein uS14 (61 aa).

Zn(2+) is bound by residues C24, C27, C40, and C43.

The protein belongs to the universal ribosomal protein uS14 family. Zinc-binding uS14 subfamily. As to quaternary structure, part of the 30S ribosomal subunit. Contacts proteins S3 and S10. Requires Zn(2+) as cofactor.

Binds 16S rRNA, required for the assembly of 30S particles and may also be responsible for determining the conformation of the 16S rRNA at the A site. This Alkaliphilus metalliredigens (strain QYMF) protein is Small ribosomal subunit protein uS14.